The following is a 928-amino-acid chain: Mating-type protein A-alpha Y4 (928 aa).

Positions 152–211 (GKRSRPKFHSEYTPVLELYFHFNAYPTYADRRILAEKTGMLTRQITVWFQNHRRRAKGPL) form a DNA-binding region, homeobox. Disordered regions lie at residues 255-296 (KSLA…EAGP), 310-329 (DSVS…SQQN), 340-359 (TATK…AGQP), 406-451 (YAYV…HRVS), and 626-736 (ARRK…EQDL). Positions 344-353 (EKRRKMKKLP) are enriched in basic residues. Positions 635–657 (KALEEKQAKKDRKERQKASRSQR) are enriched in basic and acidic residues. Low complexity-rich tracts occupy residues 668-682 (SRAS…LPAR) and 694-728 (ESAA…SMPG).

It localises to the nucleus. Its function is as follows. Specifies A-alpha-4 mating-type. May regulate the expression of genes specific to the homokaryotic cell type. In Schizophyllum commune (Split gill fungus), this protein is Mating-type protein A-alpha Y4.